Here is a 637-residue protein sequence, read N- to C-terminus: Glutamate--cysteine ligase catalytic subunit (637 aa).

N-acetylmethionine is present on Met-1. Phosphoserine is present on residues Ser-5 and Ser-8.

The protein belongs to the glutamate--cysteine ligase type 3 family. As to quaternary structure, heterodimer of a catalytic heavy chain and a regulatory light chain. Most abundant in kidney. Also found in liver and testis.

The catalysed reaction is L-cysteine + L-glutamate + ATP = gamma-L-glutamyl-L-cysteine + ADP + phosphate + H(+). The enzyme catalyses (2S)-2-aminobutanoate + L-glutamate + ATP = gamma-L-glutamyl-(2S)-2-aminobutanoate + ADP + phosphate + H(+). It participates in sulfur metabolism; glutathione biosynthesis; glutathione from L-cysteine and L-glutamate: step 1/2. Its activity is regulated as follows. Feedback inhibition by glutathione. Its function is as follows. Catalyzes the ATP-dependent ligation of L-glutamate and L-cysteine and participates in the first and rate-limiting step in glutathione biosynthesis. The polypeptide is Glutamate--cysteine ligase catalytic subunit (Rattus norvegicus (Rat)).